The sequence spans 403 residues: Phosphoglycerate kinase (403 aa).

Substrate contacts are provided by residues 21-23, Arg36, 59-62, Arg119, and Arg154; these read DFN and HVGR. ATP-binding positions include Lys207, Gly299, Glu330, and 357-360; that span reads GGDA.

The protein belongs to the phosphoglycerate kinase family. As to quaternary structure, monomer.

It is found in the cytoplasm. The catalysed reaction is (2R)-3-phosphoglycerate + ATP = (2R)-3-phospho-glyceroyl phosphate + ADP. It participates in carbohydrate degradation; glycolysis; pyruvate from D-glyceraldehyde 3-phosphate: step 2/5. The chain is Phosphoglycerate kinase (pgk) from Chlamydia trachomatis serovar D (strain ATCC VR-885 / DSM 19411 / UW-3/Cx).